Reading from the N-terminus, the 148-residue chain is Large ribosomal subunit protein bL9 (148 aa).

The protein belongs to the bacterial ribosomal protein bL9 family.

Functionally, binds to the 23S rRNA. The polypeptide is Large ribosomal subunit protein bL9 (Campylobacter concisus (strain 13826)).